A 447-amino-acid polypeptide reads, in one-letter code: Phosphoglucosamine mutase (447 aa).

Serine 104 functions as the Phosphoserine intermediate in the catalytic mechanism. Serine 104, aspartate 243, aspartate 245, and aspartate 247 together coordinate Mg(2+). Serine 104 carries the post-translational modification Phosphoserine.

Belongs to the phosphohexose mutase family. Mg(2+) is required as a cofactor. Activated by phosphorylation.

It catalyses the reaction alpha-D-glucosamine 1-phosphate = D-glucosamine 6-phosphate. In terms of biological role, catalyzes the conversion of glucosamine-6-phosphate to glucosamine-1-phosphate. This chain is Phosphoglucosamine mutase, found in Corynebacterium diphtheriae (strain ATCC 700971 / NCTC 13129 / Biotype gravis).